Here is a 724-residue protein sequence, read N- to C-terminus: Putative methyltransferase NSUN7 (724 aa).

The Nucleophile role is filled by Cys-444. Disordered stretches follow at residues 542 to 574 (KTLK…LAVD), 595 to 629 (ISTS…TPLV), and 698 to 724 (TSST…RPWL). Over residues 543–554 (TLKRDKKRKKSK) the composition is skewed to basic residues. Basic and acidic residues predominate over residues 562 to 572 (HHGDPLRDHLA). Residues 595–618 (ISTSTKMSAPAKTVSQAGTSSQVR) are compositionally biased toward polar residues.

The protein belongs to the class I-like SAM-binding methyltransferase superfamily. RsmB/NOP family. In terms of tissue distribution, expressed in testis.

In terms of biological role, may have S-adenosyl-L-methionine-dependent methyl-transferase activity. This Mus musculus (Mouse) protein is Putative methyltransferase NSUN7 (Nsun7).